The primary structure comprises 88 residues: Small ribosomal subunit protein bS20 (88 aa).

Positions 1–20 (MPNIKSAIKRTKTNNERRAH) are disordered.

This sequence belongs to the bacterial ribosomal protein bS20 family.

Its function is as follows. Binds directly to 16S ribosomal RNA. This Bacillus velezensis (strain DSM 23117 / BGSC 10A6 / LMG 26770 / FZB42) (Bacillus amyloliquefaciens subsp. plantarum) protein is Small ribosomal subunit protein bS20.